A 571-amino-acid chain; its full sequence is Proline--tRNA ligase (571 aa).

Belongs to the class-II aminoacyl-tRNA synthetase family. ProS type 1 subfamily. Homodimer.

Its subcellular location is the cytoplasm. The catalysed reaction is tRNA(Pro) + L-proline + ATP = L-prolyl-tRNA(Pro) + AMP + diphosphate. In terms of biological role, catalyzes the attachment of proline to tRNA(Pro) in a two-step reaction: proline is first activated by ATP to form Pro-AMP and then transferred to the acceptor end of tRNA(Pro). As ProRS can inadvertently accommodate and process non-cognate amino acids such as alanine and cysteine, to avoid such errors it has two additional distinct editing activities against alanine. One activity is designated as 'pretransfer' editing and involves the tRNA(Pro)-independent hydrolysis of activated Ala-AMP. The other activity is designated 'posttransfer' editing and involves deacylation of mischarged Ala-tRNA(Pro). The misacylated Cys-tRNA(Pro) is not edited by ProRS. This Thermodesulfovibrio yellowstonii (strain ATCC 51303 / DSM 11347 / YP87) protein is Proline--tRNA ligase.